A 336-amino-acid chain; its full sequence is tRNA N6-adenosine threonylcarbamoyltransferase (336 aa).

Fe cation contacts are provided by histidine 114 and histidine 118. Substrate contacts are provided by residues 136-140, aspartate 169, glycine 182, aspartate 186, and asparagine 275; that span reads LVSGG. Aspartate 301 serves as a coordination point for Fe cation.

Belongs to the KAE1 / TsaD family. The cofactor is Fe(2+).

The protein localises to the cytoplasm. The catalysed reaction is L-threonylcarbamoyladenylate + adenosine(37) in tRNA = N(6)-L-threonylcarbamoyladenosine(37) in tRNA + AMP + H(+). Required for the formation of a threonylcarbamoyl group on adenosine at position 37 (t(6)A37) in tRNAs that read codons beginning with adenine. Is involved in the transfer of the threonylcarbamoyl moiety of threonylcarbamoyl-AMP (TC-AMP) to the N6 group of A37, together with TsaE and TsaB. TsaD likely plays a direct catalytic role in this reaction. The polypeptide is tRNA N6-adenosine threonylcarbamoyltransferase (Streptococcus gordonii (strain Challis / ATCC 35105 / BCRC 15272 / CH1 / DL1 / V288)).